Consider the following 410-residue polypeptide: Argininosuccinate synthase (410 aa).

10–18 (AYSGGLDTS) contacts ATP. 2 residues coordinate L-citrulline: Tyr-88 and Ser-93. Gly-118 contributes to the ATP binding site. Positions 120, 124, and 125 each coordinate L-aspartate. Asn-124 provides a ligand contact to L-citrulline. Positions 128, 177, 186, 262, and 274 each coordinate L-citrulline.

Belongs to the argininosuccinate synthase family. Type 1 subfamily. In terms of assembly, homotetramer.

The protein localises to the cytoplasm. The enzyme catalyses L-citrulline + L-aspartate + ATP = 2-(N(omega)-L-arginino)succinate + AMP + diphosphate + H(+). It participates in amino-acid biosynthesis; L-arginine biosynthesis; L-arginine from L-ornithine and carbamoyl phosphate: step 2/3. This chain is Argininosuccinate synthase, found in Caldanaerobacter subterraneus subsp. tengcongensis (strain DSM 15242 / JCM 11007 / NBRC 100824 / MB4) (Thermoanaerobacter tengcongensis).